Consider the following 64-residue polypeptide: Conotoxin LiC121 (64 aa).

A signal peptide spans 1 to 22 (MRCVPVFIILLLLSPSAPSVDA). The propeptide occupies 23–48 (HPKTKDDVPLASFHDDAKRTLQRLWI).

It belongs to the conotoxin T superfamily. In terms of processing, contains 2 disulfide bonds that can be either 'C1-C3, C2-C4' or 'C1-C4, C2-C3', since these disulfide connectivities have been observed for conotoxins with cysteine framework V (for examples, see AC P0DQQ7 and AC P81755). In terms of tissue distribution, expressed by the venom duct.

The protein resides in the secreted. This is Conotoxin LiC121 from Conus lividus (Livid cone).